Consider the following 382-residue polypeptide: Queuine tRNA-ribosyltransferase (382 aa).

The Proton acceptor role is filled by aspartate 93. Residues 93 to 97 (DSGGF), aspartate 147, glutamine 191, and glycine 218 each bind substrate. The RNA binding stretch occupies residues 249–255 (GVGKPED). The Nucleophile role is filled by aspartate 268. The RNA binding; important for wobble base 34 recognition stretch occupies residues 273 to 277 (TRNAR). Zn(2+) contacts are provided by cysteine 306, cysteine 308, cysteine 311, and histidine 337.

The protein belongs to the queuine tRNA-ribosyltransferase family. As to quaternary structure, homodimer. Within each dimer, one monomer is responsible for RNA recognition and catalysis, while the other monomer binds to the replacement base PreQ1. Requires Zn(2+) as cofactor.

It catalyses the reaction 7-aminomethyl-7-carbaguanine + guanosine(34) in tRNA = 7-aminomethyl-7-carbaguanosine(34) in tRNA + guanine. It functions in the pathway tRNA modification; tRNA-queuosine biosynthesis. In terms of biological role, catalyzes the base-exchange of a guanine (G) residue with the queuine precursor 7-aminomethyl-7-deazaguanine (PreQ1) at position 34 (anticodon wobble position) in tRNAs with GU(N) anticodons (tRNA-Asp, -Asn, -His and -Tyr). Catalysis occurs through a double-displacement mechanism. The nucleophile active site attacks the C1' of nucleotide 34 to detach the guanine base from the RNA, forming a covalent enzyme-RNA intermediate. The proton acceptor active site deprotonates the incoming PreQ1, allowing a nucleophilic attack on the C1' of the ribose to form the product. After dissociation, two additional enzymatic reactions on the tRNA convert PreQ1 to queuine (Q), resulting in the hypermodified nucleoside queuosine (7-(((4,5-cis-dihydroxy-2-cyclopenten-1-yl)amino)methyl)-7-deazaguanosine). This Haemophilus influenzae (strain 86-028NP) protein is Queuine tRNA-ribosyltransferase.